Here is a 185-residue protein sequence, read N- to C-terminus: Ribosome-recycling factor (185 aa).

Belongs to the RRF family.

The protein localises to the cytoplasm. Its function is as follows. Responsible for the release of ribosomes from messenger RNA at the termination of protein biosynthesis. May increase the efficiency of translation by recycling ribosomes from one round of translation to another. The protein is Ribosome-recycling factor of Francisella tularensis subsp. holarctica (strain FTNF002-00 / FTA).